A 130-amino-acid polypeptide reads, in one-letter code: Small ribosomal subunit protein uS8 (130 aa).

This sequence belongs to the universal ribosomal protein uS8 family. Part of the 30S ribosomal subunit. Contacts proteins S5 and S12.

In terms of biological role, one of the primary rRNA binding proteins, it binds directly to 16S rRNA central domain where it helps coordinate assembly of the platform of the 30S subunit. The chain is Small ribosomal subunit protein uS8 from Sodalis glossinidius (strain morsitans).